The primary structure comprises 464 residues: NADH dehydrogenase [ubiquinone] flavoprotein 1, mitochondrial (464 aa).

The transit peptide at 1–20 (MLAARRLLGGSLPSRVSVRF) directs the protein to the mitochondrion. Lys-81 carries the post-translational modification N6-acetyllysine; alternate. Residue Lys-81 is modified to N6-succinyllysine; alternate. 87 to 96 (GRGGAGFPTG) lines the NADH pocket. Position 104 is an N6-acetyllysine (Lys-104). FMN is bound at residue 199-247 (RGAGAYICGEETALIESIEGKQGKPRLKPPFPADVGVFGCPTTVANVET). Position 257 is an omega-N-methylarginine (Arg-257). At Lys-375 the chain carries N6-acetyllysine. Residues Cys-379, Cys-382, Cys-385, and Cys-425 each contribute to the [4Fe-4S] cluster site.

The protein belongs to the complex I 51 kDa subunit family. In terms of assembly, core subunit of respiratory chain NADH dehydrogenase (Complex I) which is composed of 45 different subunits. This is a component of the flavoprotein-sulfur (FP) fragment of the enzyme. Interacts with RAB5IF. Requires FMN as cofactor. The cofactor is [4Fe-4S] cluster.

The protein localises to the mitochondrion inner membrane. It carries out the reaction a ubiquinone + NADH + 5 H(+)(in) = a ubiquinol + NAD(+) + 4 H(+)(out). Its function is as follows. Core subunit of the mitochondrial membrane respiratory chain NADH dehydrogenase (Complex I) which catalyzes electron transfer from NADH through the respiratory chain, using ubiquinone as an electron acceptor. Part of the peripheral arm of the enzyme, where the electrons from NADH are accepted by flavin mononucleotide (FMN) and then passed along a chain of iron-sulfur clusters by electron tunnelling to the final acceptor ubiquinone. Contains FMN, which is the initial electron acceptor as well as one iron-sulfur cluster. The protein is NADH dehydrogenase [ubiquinone] flavoprotein 1, mitochondrial of Macaca fascicularis (Crab-eating macaque).